A 353-amino-acid polypeptide reads, in one-letter code: Nicotinate-nucleotide--dimethylbenzimidazole phosphoribosyltransferase (353 aa).

Catalysis depends on glutamate 318, which acts as the Proton acceptor.

It belongs to the CobT family.

It carries out the reaction 5,6-dimethylbenzimidazole + nicotinate beta-D-ribonucleotide = alpha-ribazole 5'-phosphate + nicotinate + H(+). Its pathway is nucleoside biosynthesis; alpha-ribazole biosynthesis; alpha-ribazole from 5,6-dimethylbenzimidazole: step 1/2. Its function is as follows. Catalyzes the synthesis of alpha-ribazole-5'-phosphate from nicotinate mononucleotide (NAMN) and 5,6-dimethylbenzimidazole (DMB). The protein is Nicotinate-nucleotide--dimethylbenzimidazole phosphoribosyltransferase of Desulforudis audaxviator (strain MP104C).